Consider the following 310-residue polypeptide: Ribosomal RNA small subunit methyltransferase H (310 aa).

Residues 32–34 (GGH), D52, A83, D100, and Q107 each bind S-adenosyl-L-methionine.

The protein belongs to the methyltransferase superfamily. RsmH family.

Its subcellular location is the cytoplasm. It catalyses the reaction cytidine(1402) in 16S rRNA + S-adenosyl-L-methionine = N(4)-methylcytidine(1402) in 16S rRNA + S-adenosyl-L-homocysteine + H(+). In terms of biological role, specifically methylates the N4 position of cytidine in position 1402 (C1402) of 16S rRNA. The polypeptide is Ribosomal RNA small subunit methyltransferase H (Geobacillus sp. (strain WCH70)).